Consider the following 289-residue polypeptide: Agroclavine dehydrogenase (289 aa).

The protein belongs to the fgaFS/easG family. In terms of assembly, monomer.

It carries out the reaction agroclavine + NADP(+) = didehydroagroclavine + NADPH + H(+). It functions in the pathway alkaloid biosynthesis; ergot alkaloid biosynthesis. Agroclavine dehydrogenase; part of the gene cluster that mediates the biosynthesis of fungal ergot alkaloid ergovaline, the predominant ergopeptine product in E.festucae var. lolii. DmaW catalyzes the first step of ergot alkaloid biosynthesis by condensing dimethylallyl diphosphate (DMAP) and tryptophan to form 4-dimethylallyl-L-tryptophan. The second step is catalyzed by the methyltransferase easF that methylates 4-dimethylallyl-L-tryptophan in the presence of S-adenosyl-L-methionine, resulting in the formation of 4-dimethylallyl-L-abrine. The catalase easC and the FAD-dependent oxidoreductase easE then transform 4-dimethylallyl-L-abrine to chanoclavine-I which is further oxidized by easD in the presence of NAD(+), resulting in the formation of chanoclavine-I aldehyde. Agroclavine dehydrogenase easG then mediates the conversion of chanoclavine-I aldehyde to agroclavine via a non-enzymatic adduct reaction: the substrate is an iminium intermediate that is formed spontaneously from chanoclavine-I aldehyde in the presence of glutathione. Further conversion of agroclavine to paspalic acid is a two-step process involving oxidation of agroclavine to elymoclavine and of elymoclavine to paspalic acid, the second step being performed by the elymoclavine oxidase cloA. However, cloA does not encode a functional enzyme indicating that C.fusiformis terminates its ergot alkaloid pathway at elymoclavine. In Claviceps fusiformis (Ergot fungus), this protein is Agroclavine dehydrogenase.